A 530-amino-acid polypeptide reads, in one-letter code: Cytochrome P450 monooxygenase apf7 (530 aa).

The chain crosses the membrane as a helical span at residues 6–26 (VSPVSIWVFVIYAVTIIIAIY). N85 carries an N-linked (GlcNAc...) asparagine glycan. C464 is a heme binding site.

The protein belongs to the cytochrome P450 family. Requires heme as cofactor.

Its subcellular location is the membrane. The protein operates within secondary metabolite biosynthesis. Its function is as follows. Cytochrome P450 monooxygenase; part of the gene cluster that mediates the biosynthesis of the cyclic tetrapeptide apicidin F (APF). The non-ribosomal peptide synthetase apf1 incorporates four different amino acids to produce apicidin F: L-phenylalanine, D-pipecolic acid (D-pip), N-methoxy-L-tryptophan and L-2-aminooctanedioic acid. L-Phenylalanine is the only proteinogenic amino acid directly used by apf1. The 3 other apf1 substrates are non-proteinogenic and have to be modified by other enzymes of the cluster. Lysine is converted to delta-1-pyrroline-5-carboxylate (P5C) which is reduced to L-pipecolic acid (L-pip) by apf3. L-pip is epimerized to D-pip, probably by apf1 activity, prior to incorporation. L-Tryptophan is N-oxidyzed by one of the cytochrome P450 monooxygenases (apf7 or apf8), and further methylated at the hydroxy group by the O-methyltransferase apf6 to yield N-methoxy-L-tryptophan. The synthesis of the fourth apf1 substrate is more complex. The fatty acid synthase apf5 is involved in the synthesis of the octanoic acid backbone of L-2-aminooctanedioic acid by fixing one acetyl-CoA unit and three malonyl-CoA units. Then one of the cytochrome P450 monooxygenases (apf7 or apf8) may oxidize this backbone to 2-oxooctanoic acid. The aminotransferase apf4 is predicted to catalyze the exchange of the keto group with an amino group. The next step would be the oxidation of 2-aminooctanoic acid by one of the cytochrome P450 monooxygenases (apf7 or apf8). The last step is the oxidation of 2-amino-8-hydroxyoctanoic acid to 2-aminooctanedioic acid is catalyzed by the FAD-dependent monooxygenase apf9. The chain is Cytochrome P450 monooxygenase apf7 from Gibberella fujikuroi (strain CBS 195.34 / IMI 58289 / NRRL A-6831) (Bakanae and foot rot disease fungus).